The sequence spans 271 residues: Type III pantothenate kinase (271 aa).

Residue 6 to 13 (DVRNTHTV) coordinates ATP. 109–112 (GADR) contacts substrate. The active-site Proton acceptor is the Asp-111. Asp-131 is a binding site for K(+). Residue Ser-134 coordinates ATP. Thr-186 contacts substrate.

Belongs to the type III pantothenate kinase family. As to quaternary structure, homodimer. Requires NH4(+) as cofactor. The cofactor is K(+).

The protein localises to the cytoplasm. It catalyses the reaction (R)-pantothenate + ATP = (R)-4'-phosphopantothenate + ADP + H(+). It participates in cofactor biosynthesis; coenzyme A biosynthesis; CoA from (R)-pantothenate: step 1/5. Catalyzes the phosphorylation of pantothenate (Pan), the first step in CoA biosynthesis. The polypeptide is Type III pantothenate kinase (Mycobacterium avium (strain 104)).